A 112-amino-acid polypeptide reads, in one-letter code: Large ribosomal subunit protein P2-B (112 aa).

Residues 89–112 (APAAADAKKEEEEEDDDMGFGLFD) form a disordered region.

This sequence belongs to the eukaryotic ribosomal protein P1/P2 family. In terms of assembly, P1 and P2 exist as dimers at the large ribosomal subunit. Phosphorylated.

Its function is as follows. Plays an important role in the elongation step of protein synthesis. In Trypanosoma cruzi, this protein is Large ribosomal subunit protein P2-B.